Here is a 544-residue protein sequence, read N- to C-terminus: MTQYIFITGGVVSSLGKGISAASLGAILEARGLRITMIKLDPYINVDPGTMSPFQHGEVFVTHDGAETDLDLGHYERFVNMRATQFHNCTAGRVYLEVIQRERKGDYLGKTVQVIPHITDTIQQYILRAAQGADIAMVEIGGTVGDIESLPFMEAIRQLGTKLGRRDTMFIHLTLVPFISAAGELKTKPTQHSVKELRSIGIQPDMLICRADREIPEDEKAKISLFTNVPAKAVISGLSVKNIYEIPMLYQKQGVDDLVVKHFGLHVKEANLGDWEKVVDAINHPEHEVTVAMVGKYVNLTDAYKSLNEALYHAGIKNKTKVNIRYVDSEDLYSQGTELLAGVDAIVVPGGFGNRGVNGKLRAVQYAREENIPYLGICLGLQIAVVEFARNVLGIKNACSTEWDEKTDEPIIALVAQWVNERGEVEQRDKKMDLGGTLRLGALPAKLKAGSKIATIYGSEIMNERHRHRYEVNANYEKRLEAAGMRISGRSADNDLVEVIEIPSHRWFIGLQSHPEFTSTPLGGHPLFSAFIAAALDYQTERLS.

An amidoligase domain region spans residues 1 to 265 (MTQYIFITGG…DDLVVKHFGL (265 aa)). S13 is a CTP binding site. S13 contacts UTP. Residues 14–19 (SLGKGI) and D71 contribute to the ATP site. Mg(2+) is bound by residues D71 and E139. Residues 146 to 148 (DIE), 186 to 191 (KTKPTQ), and K222 contribute to the CTP site. UTP-binding positions include 186–191 (KTKPTQ) and K222. The 252-residue stretch at 290–541 (TVAMVGKYVN…IAAALDYQTE (252 aa)) folds into the Glutamine amidotransferase type-1 domain. G351 is an L-glutamine binding site. Residue C378 is the Nucleophile; for glutamine hydrolysis of the active site. L-glutamine contacts are provided by residues 379–382 (LGLQ), E402, and R469. Active-site residues include H514 and E516.

The protein belongs to the CTP synthase family. In terms of assembly, homotetramer.

The catalysed reaction is UTP + L-glutamine + ATP + H2O = CTP + L-glutamate + ADP + phosphate + 2 H(+). The enzyme catalyses L-glutamine + H2O = L-glutamate + NH4(+). It carries out the reaction UTP + NH4(+) + ATP = CTP + ADP + phosphate + 2 H(+). It functions in the pathway pyrimidine metabolism; CTP biosynthesis via de novo pathway; CTP from UDP: step 2/2. Allosterically activated by GTP, when glutamine is the substrate; GTP has no effect on the reaction when ammonia is the substrate. The allosteric effector GTP functions by stabilizing the protein conformation that binds the tetrahedral intermediate(s) formed during glutamine hydrolysis. Inhibited by the product CTP, via allosteric rather than competitive inhibition. Its function is as follows. Catalyzes the ATP-dependent amination of UTP to CTP with either L-glutamine or ammonia as the source of nitrogen. Regulates intracellular CTP levels through interactions with the four ribonucleotide triphosphates. This is CTP synthase from Dichelobacter nodosus (strain VCS1703A).